The chain runs to 64 residues: PYLa/PGLa A (64 aa).

An N-terminal signal peptide occupies residues 1–20; that stretch reads MYKQIFLCLIIAALCATIMA. Residues 21 to 35 constitute a propeptide that is removed on maturation; it reads EASAFADADEDDDKR. Leu59 is subject to Leucine amide. Residues 60–64 constitute a propeptide that is removed on maturation; sequence GRRDS.

The protein belongs to the gastrin/cholecystokinin family. Magainin subfamily. As to expression, expressed by the skin glands. Synthesized in the stomach and stored in a novel granular multinucleated cell in the gastric mucosa. Stored as active, processed peptides in large granules within the granular gland secretions of the skin.

The protein resides in the secreted. Functionally, PGLa and PGLa-H display a broad-spectrum of antibacterial activity against a range of Gram-positive and Gram-negative bacteria. PGLa also displays antifungal activity against C.albicans ATCC 14053. PGLa-H shows moderate antibacterial activity against the multidrug-resistant methicillin-resistant S.aureus (MRSA) but exhibits very little hemolytic activity. This Xenopus laevis (African clawed frog) protein is PYLa/PGLa A (pgla-a).